We begin with the raw amino-acid sequence, 217 residues long: NADH-quinone oxidoreductase subunit I (217 aa).

Positions 22-41 (TTEQYPEEKKETAPRFHGRH) are disordered. 2 consecutive 4Fe-4S ferredoxin-type domains span residues 43-73 (LNRH…VEGA) and 89-118 (RVYQ…MSND). Residues Cys53, Cys56, Cys59, Cys63, Cys98, Cys101, Cys104, and Cys108 each contribute to the [4Fe-4S] cluster site. The interval 193 to 217 (ARRTAGEHSRADEVPAHGAGSERPR) is disordered.

The protein belongs to the complex I 23 kDa subunit family. As to quaternary structure, NDH-1 is composed of 14 different subunits. Subunits NuoA, H, J, K, L, M, N constitute the membrane sector of the complex. The cofactor is [4Fe-4S] cluster.

It is found in the cell membrane. It catalyses the reaction a quinone + NADH + 5 H(+)(in) = a quinol + NAD(+) + 4 H(+)(out). NDH-1 shuttles electrons from NADH, via FMN and iron-sulfur (Fe-S) centers, to quinones in the respiratory chain. The immediate electron acceptor for the enzyme in this species is believed to be ubiquinone. Couples the redox reaction to proton translocation (for every two electrons transferred, four hydrogen ions are translocated across the cytoplasmic membrane), and thus conserves the redox energy in a proton gradient. This Frankia casuarinae (strain DSM 45818 / CECT 9043 / HFP020203 / CcI3) protein is NADH-quinone oxidoreductase subunit I.